A 626-amino-acid polypeptide reads, in one-letter code: Chaperone protein DnaK (626 aa).

T197 is modified (phosphothreonine; by autocatalysis). Composition is skewed to basic and acidic residues over residues 512 to 528 (DAEAHKEDDKKRKEAVE) and 539 to 551 (QTEKSLSEMGEKI). Disordered stretches follow at residues 512–551 (DAEAHKEDDKKRKEAVEARNAADSLAHQTEKSLSEMGEKI) and 601–626 (DQNAGAADGGAEKKKKDDDVIDAEVE).

The protein belongs to the heat shock protein 70 family.

Its function is as follows. Acts as a chaperone. The chain is Chaperone protein DnaK from Campylobacter fetus subsp. fetus (strain 82-40).